Reading from the N-terminus, the 362-residue chain is Phosphoserine aminotransferase (362 aa).

Ser9 and Arg42 together coordinate L-glutamate. Pyridoxal 5'-phosphate contacts are provided by residues 76–77, Trp102, Thr153, Asp174, and Gln197; that span reads GR. Position 198 is an N6-(pyridoxal phosphate)lysine (Lys198). A pyridoxal 5'-phosphate-binding site is contributed by 239 to 240; it reads NT.

The protein belongs to the class-V pyridoxal-phosphate-dependent aminotransferase family. SerC subfamily. As to quaternary structure, homodimer. Pyridoxal 5'-phosphate is required as a cofactor.

The protein resides in the cytoplasm. It carries out the reaction O-phospho-L-serine + 2-oxoglutarate = 3-phosphooxypyruvate + L-glutamate. It catalyses the reaction 4-(phosphooxy)-L-threonine + 2-oxoglutarate = (R)-3-hydroxy-2-oxo-4-phosphooxybutanoate + L-glutamate. Its pathway is amino-acid biosynthesis; L-serine biosynthesis; L-serine from 3-phospho-D-glycerate: step 2/3. The protein operates within cofactor biosynthesis; pyridoxine 5'-phosphate biosynthesis; pyridoxine 5'-phosphate from D-erythrose 4-phosphate: step 3/5. Functionally, catalyzes the reversible conversion of 3-phosphohydroxypyruvate to phosphoserine and of 3-hydroxy-2-oxo-4-phosphonooxybutanoate to phosphohydroxythreonine. This is Phosphoserine aminotransferase from Salmonella choleraesuis (strain SC-B67).